Reading from the N-terminus, the 986-residue chain is Probable serine/threonine-protein kinase DDB_G0272092 (986 aa).

The region spanning 1–107 is the C2 domain; the sequence is MARKIGSVRI…EYIVDTTKWY (107 aa). Residues D22, D28, D76, D78, S81, and D84 each contribute to the Ca(2+) site. 6 ANK repeats span residues 137–167, 171–201, 205–238, 242–274, 278–307, and 312–344; these read PEKS…DYTI, EGTP…RVSI, HGNT…GIND, LGET…IINH, TRDT…NVMI, and PSRT…WLNE. The SAM domain maps to 333–396; sequence EKVIEISDWL…LRAVRKIKDP (64 aa). A compositionally biased stretch (low complexity) spans 412-438; it reads HVENDNNNNNNNNNNNNNSQEQCNINN. Disordered regions lie at residues 412-520 and 532-574; these read HVEN…SNTT and TTLT…PEGP. Residues 439–448 are compositionally biased toward polar residues; the sequence is DSLGSGNRNS. The segment covering 454–464 has biased composition (low complexity); it reads QNQNNTLNNNN. Residues 465–476 show a composition bias toward polar residues; sequence VESKSTGNLNSL. Composition is skewed to low complexity over residues 493 to 520 and 546 to 571; these read NILS…SNTT and TEST…TVTP. Residues 601 to 870 enclose the Protein kinase domain; the sequence is LTYNVLLGTG…ELLKIRDEYN (270 aa). Residues 607 to 615 and K628 each bind ATP; that span reads LGTGASGKV. The active-site Proton acceptor is D722. 2 stretches are compositionally biased toward low complexity: residues 901 to 913 and 928 to 947; these read DSNN…NNNN and SNSN…SDNN. The segment at 901-986 is disordered; sequence DSNNINNNNN…SPMEPKSIKK (86 aa). Polar residues-rich tracts occupy residues 948 to 959 and 969 to 978; these read ISEPATTDSITK and LTRTRSSSSP.

The protein belongs to the protein kinase superfamily. TKL Ser/Thr protein kinase family. It depends on Ca(2+) as a cofactor.

The catalysed reaction is L-seryl-[protein] + ATP = O-phospho-L-seryl-[protein] + ADP + H(+). It catalyses the reaction L-threonyl-[protein] + ATP = O-phospho-L-threonyl-[protein] + ADP + H(+). The sequence is that of Probable serine/threonine-protein kinase DDB_G0272092 from Dictyostelium discoideum (Social amoeba).